The primary structure comprises 131 residues: Leptin receptor overlapping transcript-like 1 (131 aa).

Helical transmembrane passes span 7–27, 32–52, 69–89, and 100–120; these read LISL…GCAL, KYWP…YCIA, LAIF…IVFA, and ALVL…FLVF.

Belongs to the OB-RGRP/VPS55 family. In terms of assembly, interacts with RAB13. As to expression, widely expressed, with highest expression in heart, testis, adrenal gland, thymus, and spleen, and lowest expression in lung and skeletal muscle.

It localises to the membrane. Functionally, negatively regulates growth hormone (GH) receptor cell surface expression in liver. May play a role in liver resistance to GH during periods of reduced nutrient availability. The polypeptide is Leptin receptor overlapping transcript-like 1 (LEPROTL1) (Homo sapiens (Human)).